The primary structure comprises 654 residues: Probable Xaa-Pro aminopeptidase P (654 aa).

Positions 449, 460, 558, and 572 each coordinate Mn(2+).

The protein belongs to the peptidase M24B family. It depends on Mn(2+) as a cofactor.

The enzyme catalyses Release of any N-terminal amino acid, including proline, that is linked to proline, even from a dipeptide or tripeptide.. Functionally, catalyzes the removal of a penultimate prolyl residue from the N-termini of peptides. The polypeptide is Probable Xaa-Pro aminopeptidase P (ampp) (Neosartorya fischeri (strain ATCC 1020 / DSM 3700 / CBS 544.65 / FGSC A1164 / JCM 1740 / NRRL 181 / WB 181) (Aspergillus fischerianus)).